Here is a 345-residue protein sequence, read N- to C-terminus: Dihydroorotate dehydrogenase (quinone) (345 aa).

FMN contacts are provided by residues 65-69 (AGLDK) and Thr-89. Lys-69 serves as a coordination point for substrate. 114–118 (NRMGF) provides a ligand contact to substrate. Positions 142 and 175 each coordinate FMN. Position 175 (Asn-175) interacts with substrate. Ser-178 acts as the Nucleophile in catalysis. Asn-180 contacts substrate. Residues Lys-220 and Thr-248 each coordinate FMN. Position 249–250 (249–250 (NT)) interacts with substrate. FMN is bound by residues Gly-271, Gly-300, and 321 to 322 (YT).

Belongs to the dihydroorotate dehydrogenase family. Type 2 subfamily. In terms of assembly, monomer. The cofactor is FMN.

The protein resides in the cell membrane. The catalysed reaction is (S)-dihydroorotate + a quinone = orotate + a quinol. The protein operates within pyrimidine metabolism; UMP biosynthesis via de novo pathway; orotate from (S)-dihydroorotate (quinone route): step 1/1. Catalyzes the conversion of dihydroorotate to orotate with quinone as electron acceptor. The polypeptide is Dihydroorotate dehydrogenase (quinone) (Burkholderia multivorans (strain ATCC 17616 / 249)).